The sequence spans 160 residues: NADH-quinone oxidoreductase subunit B (160 aa).

The [4Fe-4S] cluster site is built by C37, C38, C102, and C132.

Belongs to the complex I 20 kDa subunit family. As to quaternary structure, NDH-1 is composed of 14 different subunits. Subunits NuoB, C, D, E, F, and G constitute the peripheral sector of the complex. The cofactor is [4Fe-4S] cluster.

It is found in the cell inner membrane. The enzyme catalyses a quinone + NADH + 5 H(+)(in) = a quinol + NAD(+) + 4 H(+)(out). Functionally, NDH-1 shuttles electrons from NADH, via FMN and iron-sulfur (Fe-S) centers, to quinones in the respiratory chain. Couples the redox reaction to proton translocation (for every two electrons transferred, four hydrogen ions are translocated across the cytoplasmic membrane), and thus conserves the redox energy in a proton gradient. The polypeptide is NADH-quinone oxidoreductase subunit B (Neisseria gonorrhoeae (strain ATCC 700825 / FA 1090)).